The chain runs to 116 residues: NADH-ubiquinone oxidoreductase chain 3 (116 aa).

The next 3 membrane-spanning stretches (helical) occupy residues 8–28 (VVATALVSLILAFIAFWLPSL), 56–76 (FFLIAILFLLFDLEIALLLPL), and 88–108 (TLLWTTTILVLLTLGLIYEWF).

It belongs to the complex I subunit 3 family.

The protein localises to the mitochondrion membrane. It carries out the reaction a ubiquinone + NADH + 5 H(+)(in) = a ubiquinol + NAD(+) + 4 H(+)(out). Its function is as follows. Core subunit of the mitochondrial membrane respiratory chain NADH dehydrogenase (Complex I) that is believed to belong to the minimal assembly required for catalysis. Complex I functions in the transfer of electrons from NADH to the respiratory chain. The immediate electron acceptor for the enzyme is believed to be ubiquinone. The sequence is that of NADH-ubiquinone oxidoreductase chain 3 (MT-ND3) from Scyliorhinus canicula (Small-spotted catshark).